The following is a 209-amino-acid chain: MSEELSADTSYTEDDFYCPVCQEVLKTPVRTAACQHVFCRKCFLTAMRESGIHCPLCRGSVTRRERACPERAIDLENIMRRVSGSCRCCSKKIKFYRMRHHYKSCKKYQDEYGVSSVIPNVKISQDSVRSSNRSETSASDNTETYQEDTSSSGHPTFKCPLCQESNFTRQRLLDHCNSNHLFQIVPVNLQLDEETQYQTAVEESFQVNM.

Residues 18 to 58 form an RING-type zinc finger; it reads CPVCQEVLKTPVRTAACQHVFCRKCFLTAMRESGIHCPLCR. Residues cysteine 86, cysteine 89, histidine 101, and cysteine 105 each contribute to the Zn(2+) site. The C2HC RNF-type zinc finger occupies 86–105; that stretch reads CRCCSKKIKFYRMRHHYKSC. Residues 125-154 form a disordered region; the sequence is QDSVRSSNRSETSASDNTETYQEDTSSSGH. Threonine 142 is modified (phosphothreonine). The segment at 157 to 180 adopts a C2H2-type zinc-finger fold; sequence FKCPLCQESNFTRQRLLDHCNSNH. Residues 189 to 207 enclose the UIM domain; sequence LQLDEETQYQTAVEESFQV.

As to quaternary structure, interacts with NLK. Interacts with XRCC5/Ku80. Interacts with RBBP8/CtIP. Post-translationally, auto-ubiquitinated.

The protein localises to the chromosome. It carries out the reaction S-ubiquitinyl-[E2 ubiquitin-conjugating enzyme]-L-cysteine + [acceptor protein]-L-lysine = [E2 ubiquitin-conjugating enzyme]-L-cysteine + N(6)-ubiquitinyl-[acceptor protein]-L-lysine.. It participates in protein modification; protein ubiquitination. Its function is as follows. E3 ubiquitin-protein ligase involved in DNA damage response by promoting DNA resection and homologous recombination. Recruited to sites of double-strand breaks following DNA damage and specifically promotes double-strand break repair via homologous recombination. Two different, non-exclusive, mechanisms have been proposed. According to a report, regulates the choice of double-strand break repair by favoring homologous recombination over non-homologous end joining (NHEJ): acts by mediating ubiquitination of XRCC5/Ku80, leading to remove the Ku complex from DNA breaks, thereby promoting homologous recombination. According to another report, cooperates with UBE2Ds E2 ubiquitin ligases (UBE2D1, UBE2D2, UBE2D3 or UBE2D4) to promote homologous recombination by mediating ubiquitination of RBBP8/CtIP. Together with NLK, involved in the ubiquitination and degradation of TCF/LEF. Also exhibits auto-ubiquitination activity in combination with UBE2K. May act as a negative regulator in the Wnt/beta-catenin-mediated signaling pathway. The sequence is that of E3 ubiquitin-protein ligase RNF138 from Rattus norvegicus (Rat).